Reading from the N-terminus, the 74-residue chain is Protein kish-B (74 aa).

The signal sequence occupies residues 1 to 22 (MTNVYSFDGILVFGLLFICTCA). Over 23 to 52 (YLKKVPRLNSWLLSEKKGVWGVFYKAAVIG) the chain is Extracellular. Residues 53–73 (TRLHVVVAASCLCMAFYLIFL) form a helical membrane-spanning segment. Residue Lys74 is a topological domain, cytoplasmic.

This sequence belongs to the KISH family.

The protein resides in the golgi apparatus membrane. In terms of biological role, involved in the early part of the secretory pathway. This is Protein kish-B (tmem167b) from Danio rerio (Zebrafish).